The following is a 353-amino-acid chain: Photosystem II D2 protein (353 aa).

Thr-2 is subject to N-acetylthreonine. Thr-2 is modified (phosphothreonine). The helical transmembrane segment at 41-61 threads the bilayer; sequence CAYFALGGWFTGTTFVTSWYT. Position 118 (His-118) interacts with chlorophyll a. Residues 125-141 form a helical membrane-spanning segment; sequence GFMLRQFELARSVQLRP. Gln-130 and Asn-143 together coordinate pheophytin a. A helical transmembrane segment spans residues 153-166; sequence VFVSVFLIYPLGQS. His-198 serves as a coordination point for chlorophyll a. Residues 208-228 traverse the membrane as a helical segment; that stretch reads AALLCAIHGATVENTLFEDGD. The a plastoquinone site is built by His-215 and Phe-262. His-215 lines the Fe cation pocket. Residue His-269 coordinates Fe cation. The helical transmembrane segment at 279-295 threads the bilayer; that stretch reads GLWMSALGVVGLALNLR.

This sequence belongs to the reaction center PufL/M/PsbA/D family. As to quaternary structure, PSII is composed of 1 copy each of membrane proteins PsbA, PsbB, PsbC, PsbD, PsbE, PsbF, PsbH, PsbI, PsbJ, PsbK, PsbL, PsbM, PsbT, PsbX, PsbY, PsbZ, Psb30/Ycf12, at least 3 peripheral proteins of the oxygen-evolving complex and a large number of cofactors. It forms dimeric complexes. The cofactor is The D1/D2 heterodimer binds P680, chlorophylls that are the primary electron donor of PSII, and subsequent electron acceptors. It shares a non-heme iron and each subunit binds pheophytin, quinone, additional chlorophylls, carotenoids and lipids. There is also a Cl(-1) ion associated with D1 and D2, which is required for oxygen evolution. The PSII complex binds additional chlorophylls, carotenoids and specific lipids..

It is found in the plastid. The protein resides in the chloroplast thylakoid membrane. It carries out the reaction 2 a plastoquinone + 4 hnu + 2 H2O = 2 a plastoquinol + O2. Its function is as follows. Photosystem II (PSII) is a light-driven water:plastoquinone oxidoreductase that uses light energy to abstract electrons from H(2)O, generating O(2) and a proton gradient subsequently used for ATP formation. It consists of a core antenna complex that captures photons, and an electron transfer chain that converts photonic excitation into a charge separation. The D1/D2 (PsbA/PsbD) reaction center heterodimer binds P680, the primary electron donor of PSII as well as several subsequent electron acceptors. D2 is needed for assembly of a stable PSII complex. The protein is Photosystem II D2 protein of Chloranthus spicatus (Chulantree).